The following is a 500-amino-acid chain: ATP synthase subunit alpha (500 aa).

168–175 (GDRQTGKT) is a binding site for ATP.

The protein belongs to the ATPase alpha/beta chains family. As to quaternary structure, F-type ATPases have 2 components, CF(1) - the catalytic core - and CF(0) - the membrane proton channel. CF(1) has five subunits: alpha(3), beta(3), gamma(1), delta(1), epsilon(1). CF(0) has three main subunits: a(1), b(2) and c(9-12). The alpha and beta chains form an alternating ring which encloses part of the gamma chain. CF(1) is attached to CF(0) by a central stalk formed by the gamma and epsilon chains, while a peripheral stalk is formed by the delta and b chains.

The protein localises to the cell membrane. The enzyme catalyses ATP + H2O + 4 H(+)(in) = ADP + phosphate + 5 H(+)(out). Produces ATP from ADP in the presence of a proton gradient across the membrane. The alpha chain is a regulatory subunit. This is ATP synthase subunit alpha from Streptococcus suis (strain 98HAH33).